The following is a 357-amino-acid chain: DNA replication and repair protein RecF (357 aa).

30–37 contributes to the ATP binding site; sequence GANGSGKT.

This sequence belongs to the RecF family.

Its subcellular location is the cytoplasm. In terms of biological role, the RecF protein is involved in DNA metabolism; it is required for DNA replication and normal SOS inducibility. RecF binds preferentially to single-stranded, linear DNA. It also seems to bind ATP. In Salmonella agona (strain SL483), this protein is DNA replication and repair protein RecF.